Here is a 610-residue protein sequence, read N- to C-terminus: Aspartate--tRNA(Asp/Asn) ligase (610 aa).

Glutamate 182 serves as a coordination point for L-aspartate. The interval 206–209 (QLFK) is aspartate. An L-aspartate-binding site is contributed by arginine 228. Residues 228–230 (RDE) and glutamine 237 contribute to the ATP site. Histidine 470 serves as a coordination point for L-aspartate. Glutamate 506 provides a ligand contact to ATP. Position 513 (arginine 513) interacts with L-aspartate. 558 to 561 (GLDR) provides a ligand contact to ATP.

Belongs to the class-II aminoacyl-tRNA synthetase family. Type 1 subfamily. In terms of assembly, homodimer.

The protein resides in the cytoplasm. It carries out the reaction tRNA(Asx) + L-aspartate + ATP = L-aspartyl-tRNA(Asx) + AMP + diphosphate. Functionally, aspartyl-tRNA synthetase with relaxed tRNA specificity since it is able to aspartylate not only its cognate tRNA(Asp) but also tRNA(Asn). Reaction proceeds in two steps: L-aspartate is first activated by ATP to form Asp-AMP and then transferred to the acceptor end of tRNA(Asp/Asn). In Acidobacterium capsulatum (strain ATCC 51196 / DSM 11244 / BCRC 80197 / JCM 7670 / NBRC 15755 / NCIMB 13165 / 161), this protein is Aspartate--tRNA(Asp/Asn) ligase.